The sequence spans 393 residues: 4-hydroxyphenylpyruvate dioxygenase (393 aa).

2 consecutive VOC domains span residues 17 to 148 and 179 to 339; these read AFDH…LLER and FLDH…IFSK. Residues H182, H267, and E350 each coordinate Fe cation.

This sequence belongs to the 4HPPD family. Fe cation is required as a cofactor. In terms of tissue distribution, expressed in the hypodermis and intestine.

The enzyme catalyses 3-(4-hydroxyphenyl)pyruvate + O2 = homogentisate + CO2. It participates in amino-acid degradation; L-phenylalanine degradation; acetoacetate and fumarate from L-phenylalanine: step 3/6. Functionally, key enzyme in the degradation of tyrosine. This is 4-hydroxyphenylpyruvate dioxygenase from Caenorhabditis elegans.